The sequence spans 437 residues: MNAYQNKNITIIGLGKTGLSCVDYLLSQQANIRVIDTRKKPTGIDKLPQNIPLHTGSLNQEWLLESDMIVISPGLAVKTPEIQTALKAGVEVIGDIELFCRAATKPIVGITGSNGKSTVTTLVYEMAKAAGVKVGMGGNIGIPALSLLNEDCELYVLELSSFQLETTYSLKAAAATVLNVTEDHMDRYMDLEDYRQAKLRIYHNAEVGVLNNEDKLTFGEGENQARQTVSFAENSADYWLKTENGKQYLMVKDEVILPCEEVTLVGRHNYMNILAATALAQAVGINLDSIRTALRHFKGLDHRFQLVHQANGIRWINDSKATNVGSTVAALAGLYIEGKLHLLLGGDGKGADFSELAELINQPHIICYCFGRDGVQLAKFSSQSYLFETMEQAIEFLRPTLQSGDMVLLSPACASLDQFASFEKRGEEFTHLAQYSA.

An ATP-binding site is contributed by 112–118; it reads GSNGKST.

It belongs to the MurCDEF family.

The protein resides in the cytoplasm. It carries out the reaction UDP-N-acetyl-alpha-D-muramoyl-L-alanine + D-glutamate + ATP = UDP-N-acetyl-alpha-D-muramoyl-L-alanyl-D-glutamate + ADP + phosphate + H(+). The protein operates within cell wall biogenesis; peptidoglycan biosynthesis. In terms of biological role, cell wall formation. Catalyzes the addition of glutamate to the nucleotide precursor UDP-N-acetylmuramoyl-L-alanine (UMA). The polypeptide is UDP-N-acetylmuramoylalanine--D-glutamate ligase (Haemophilus influenzae (strain 86-028NP)).